We begin with the raw amino-acid sequence, 972 residues long: N-alpha-acetyltransferase 25, NatB auxiliary subunit (972 aa).

4 TPR repeats span residues 11 to 44, 45 to 78, 79 to 112, and 114 to 146; these read NDRRLRPIYDYLDNGNNKMAIQQADKLLKKHKDL, HCAKVLKAIGLQRTGKQEEAFTLAQEVAALEPTD, DNSLQALTILYREMHRPELVTKLYEAAVKKVPNS, and EYHSHLFMAYARVGEYKKMQQAGMALYKIVPKN.

This sequence belongs to the MDM20/NAA25 family. As to quaternary structure, component of the N-terminal acetyltransferase B (NatB) complex which is composed of NAA20 and NAA25.

The protein localises to the cytoplasm. Non-catalytic subunit of the NatB complex which catalyzes acetylation of the N-terminal methionine residues of peptides beginning with Met-Asp, Met-Glu, Met-Asn and Met-Gln. May play a role in normal cell-cycle progression. The protein is N-alpha-acetyltransferase 25, NatB auxiliary subunit (NAA25) of Homo sapiens (Human).